We begin with the raw amino-acid sequence, 287 residues long: Ferredoxin-type protein NapH (287 aa).

Topologically, residues 1 to 29 (MANRKRDAGREALEKKGWWRSHRWLVLRR) are cytoplasmic. Residues 30–50 (LCQFFVLGMFLSGPWFGVWIL) form a helical membrane-spanning segment. Over 51 to 79 (HGNYSSSLLFDTVPLTDPLMTLQSLASGH) the chain is Periplasmic. Residues 80 to 100 (LPATVALTGAVIITVLYALAG) form a helical membrane-spanning segment. At 101–139 (KRLFCSWVCPLNPITDLANWLRRRFDLNQSATIPRHIRY) the chain is on the cytoplasmic side. The helical transmembrane segment at 140–160 (VLLVVILVGSALTGTLIWEWI) threads the bilayer. The Periplasmic portion of the chain corresponds to 161-170 (NPVSLMGRSL). Residues 171-191 (VMGFGSGALLILALFLFDLLV) form a helical membrane-spanning segment. The Cytoplasmic portion of the chain corresponds to 192-287 (VEHGWCGHIC…TTRWSSGAKS (96 aa)). 2 4Fe-4S ferredoxin-type domains span residues 217 to 247 (TVAA…APVL) and 251 to 280 (SPVQ…ITTR). [4Fe-4S] cluster-binding residues include Cys226, Cys229, Cys232, Cys236, Cys260, Cys263, Cys266, and Cys270.

Interacts with NapC. [4Fe-4S] cluster serves as cofactor.

The protein localises to the cell inner membrane. In terms of biological role, required for electron transfer from ubiquinol, via NapC, to the periplasmic nitrate reductase NapAB complex. The protein is Ferredoxin-type protein NapH (napH) of Escherichia coli (strain K12).